A 360-amino-acid chain; its full sequence is 3-dehydroquinate synthase (360 aa).

NAD(+)-binding positions include 71–76 (DGEQYK), 105–109 (GVVGD), 129–130 (TT), lysine 142, lysine 151, and 169–172 (TLNT). Residues glutamate 184, histidine 248, and histidine 265 each contribute to the Zn(2+) site.

This sequence belongs to the sugar phosphate cyclases superfamily. Dehydroquinate synthase family. Co(2+) serves as cofactor. Requires Zn(2+) as cofactor. The cofactor is NAD(+).

The protein resides in the cytoplasm. The catalysed reaction is 7-phospho-2-dehydro-3-deoxy-D-arabino-heptonate = 3-dehydroquinate + phosphate. Its pathway is metabolic intermediate biosynthesis; chorismate biosynthesis; chorismate from D-erythrose 4-phosphate and phosphoenolpyruvate: step 2/7. In terms of biological role, catalyzes the conversion of 3-deoxy-D-arabino-heptulosonate 7-phosphate (DAHP) to dehydroquinate (DHQ). The chain is 3-dehydroquinate synthase from Coxiella burnetii (strain CbuG_Q212) (Coxiella burnetii (strain Q212)).